The following is a 350-amino-acid chain: Outer membrane protein A (350 aa).

The signal sequence occupies residues 1-21 (MKKTAIAIAVALAGFATVAQA). 8 beta stranded membrane-spanning segments follow: residues 27-37 (TWYAGAKLGWS), 55-66 (QLGAGAFGGYQV), 70-78 (VGFEMGYDW), 96-107 (QGVQLTAKLGYP), 112-120 (LDVYTRLGG), 146-155 (PVFAGGIEYA), 160-167 (IATRLEYQ), and 186-194 (LLSVGVSYR). 4 consecutive repeat copies span residues 205 to 206 (AP), 207 to 208 (AP), 209 to 210 (AP), and 211 to 212 (AP). A 4 X 2 AA tandem repeats of A-P region spans residues 205–212 (APAPAPAP). In terms of domain architecture, OmpA-like spans 214–342 (VQTKHFTLKS…RVEIEVKGVK (129 aa)). A disulfide bridge links C315 with C327.

Belongs to the outer membrane OOP (TC 1.B.6) superfamily. OmpA family. In terms of assembly, monomer and homodimer.

The protein localises to the cell outer membrane. Its function is as follows. With TolR probably plays a role in maintaining the position of the peptidoglycan cell wall in the periplasm. Acts as a porin with low permeability that allows slow penetration of small solutes; an internal gate slows down solute passage. Required for conjugation with F-type plasmids; probably serves as the mating receptor on recipient cells. This is Outer membrane protein A from Salmonella typhi.